The chain runs to 58 residues: Small integral membrane protein 11 (58 aa).

The chain crosses the membrane as a helical span at residues 10–32 (PLLLYILAAKTLILCLTFAGVKM). Residues 29 to 58 (GVKMYQRKRLEAKQQKLEAERKKQSEKKDN) adopt a coiled-coil conformation.

As to expression, expressed in heart, spleen, liver, stomach, muscle, lung, testis, skin, PBL and bone marrow.

The protein localises to the membrane. The sequence is that of Small integral membrane protein 11 from Homo sapiens (Human).